The sequence spans 213 residues: NADH-quinone oxidoreductase subunit I (213 aa).

4Fe-4S ferredoxin-type domains are found at residues R74–S103 and G113–E142. The [4Fe-4S] cluster site is built by C83, C86, C89, C93, C122, C125, C128, and C132.

It belongs to the complex I 23 kDa subunit family. In terms of assembly, NDH-1 is composed of 14 different subunits. Subunits NuoA, H, J, K, L, M, N constitute the membrane sector of the complex. Requires [4Fe-4S] cluster as cofactor.

Its subcellular location is the cell inner membrane. The enzyme catalyses a quinone + NADH + 5 H(+)(in) = a quinol + NAD(+) + 4 H(+)(out). Its function is as follows. NDH-1 shuttles electrons from NADH, via FMN and iron-sulfur (Fe-S) centers, to quinones in the respiratory chain. The immediate electron acceptor for the enzyme in this species is believed to be ubiquinone. Couples the redox reaction to proton translocation (for every two electrons transferred, four hydrogen ions are translocated across the cytoplasmic membrane), and thus conserves the redox energy in a proton gradient. This is NADH-quinone oxidoreductase subunit I from Campylobacter jejuni subsp. doylei (strain ATCC BAA-1458 / RM4099 / 269.97).